The sequence spans 699 residues: DNA ligase (699 aa).

Residues Met-1–Arg-29 are disordered. NAD(+) is bound by residues Asp-60 to Asp-64, Ser-108 to Ile-109, and Glu-137. Lys-139 serves as the catalytic N6-AMP-lysine intermediate. NAD(+)-binding residues include Arg-160, Glu-196, Lys-311, and Lys-335. Zn(2+) contacts are provided by Cys-425, Cys-428, Cys-441, and Cys-447. Positions Ser-613–Arg-666 constitute a BRCT domain.

The protein belongs to the NAD-dependent DNA ligase family. LigA subfamily. Requires Mg(2+) as cofactor. Mn(2+) is required as a cofactor.

It carries out the reaction NAD(+) + (deoxyribonucleotide)n-3'-hydroxyl + 5'-phospho-(deoxyribonucleotide)m = (deoxyribonucleotide)n+m + AMP + beta-nicotinamide D-nucleotide.. Its activity is regulated as follows. Displays maximal in vitro activity at high salt levels. DNA ligase that catalyzes the formation of phosphodiester linkages between 5'-phosphoryl and 3'-hydroxyl groups in double-stranded DNA using NAD as a coenzyme and as the energy source for the reaction. It is essential for DNA replication and repair of damaged DNA. The polypeptide is DNA ligase (Haloferax volcanii (strain ATCC 29605 / DSM 3757 / JCM 8879 / NBRC 14742 / NCIMB 2012 / VKM B-1768 / DS2) (Halobacterium volcanii)).